Here is a 902-residue protein sequence, read N- to C-terminus: Glutamate receptor 4 (902 aa).

Positions 1-20 are cleaved as a signal peptide; sequence MRIISRQIVLLFSGFWGLAM. Over 22–544 the chain is Extracellular; that stretch reads AFPSSVQIGG…GVFSFLDPLA (523 aa). Residues asparagine 52, asparagine 56, asparagine 258, asparagine 371, asparagine 407, and asparagine 414 are each glycosylated (N-linked (GlcNAc...) asparagine). An intrachain disulfide couples cysteine 84 to cysteine 331. 3 residues coordinate L-glutamate: proline 500, threonine 502, and arginine 507. The chain crosses the membrane as a helical span at residues 545-565; it reads YEIWMCIVFAYIGVSVVLFLV. Residues 566 to 592 are Cytoplasmic-facing; the sequence is SRFSPYEWHTEEPEDGKEGPSDQPPNE. The helical; Pore-forming intramembrane region spans 593–608; the sequence is FGIFNSLWFSLGAFMQ. The stretch at 609–611 is an intramembrane region; the sequence is QGC. Residue cysteine 611 is the site of S-palmitoyl cysteine attachment. Over 612 to 617 the chain is Cytoplasmic; the sequence is DISPRS. Residues 618-638 form a helical membrane-spanning segment; sequence LSGRIVGGVWWFFTLIIISSY. Over 639-813 the chain is Extracellular; sequence TANLAAFLTV…DKTSALSLSN (175 aa). The L-glutamate site is built by serine 676, threonine 677, and glutamate 727. A disulfide bond links cysteine 740 and cysteine 795. A helical membrane pass occupies residues 814–834; the sequence is VAGVFYILVGGLGLAMLVALI. At 835 to 902 the chain is on the cytoplasmic side; it reads EFCYKSRAEA…GLAVIASDLP (68 aa). The S-palmitoyl cysteine moiety is linked to residue cysteine 837. Serine 862 carries the post-translational modification Phosphoserine; by PKC/PRKCG.

It belongs to the glutamate-gated ion channel (TC 1.A.10.1) family. GRIA4 subfamily. As to quaternary structure, homotetramer or heterotetramer of pore-forming glutamate receptor subunits. Tetramers may be formed by the dimerization of dimers. Interacts with EPB41L1 via its C-terminus. Isoform 3 interacts with PICK1. Found in a complex with GRIA1, GRIA2, GRIA3, CNIH2, CNIH3, CACNG2, CACNG3, CACNG4, CACNG5, CACNG7 and CACNG8. Interacts with CACNG5 and PRKCG. Found in a complex with GRIA1, GRIA2, GRIA3, DLG4, CACNG8 and CNIH2. In terms of processing, palmitoylated. Depalmitoylated upon L-glutamate stimulation. ZDHHC3/GODZ specifically palmitoylates Cys-611, which leads to Golgi retention and decreased cell surface expression. In contrast, Cys-837 palmitoylation does not affect cell surface expression but regulates stimulation-dependent endocytosis. Phosphorylated at Ser-862 by PRKCG; phosphorylation increases plasma membrane-associated GRI4 expression.

It localises to the cell membrane. Its subcellular location is the postsynaptic cell membrane. The protein localises to the cell projection. It is found in the dendrite. The enzyme catalyses Ca(2+)(in) = Ca(2+)(out). It catalyses the reaction Na(+)(in) = Na(+)(out). The catalysed reaction is Mg(2+)(in) = Mg(2+)(out). Functionally, ionotropic glutamate receptor that functions as a ligand-gated cation channel, gated by L-glutamate and glutamatergic agonists such as alpha-amino-3-hydroxy-5-methyl-4-isoxazolepropionic acid (AMPA), quisqualic acid, and kainic acid. L-glutamate acts as an excitatory neurotransmitter at many synapses in the central nervous system and plays an important role in fast excitatory synaptic transmission. Binding of the excitatory neurotransmitter L-glutamate induces a conformation change, leading to the opening of the cation channel, and thereby converts the chemical signal to an electrical impulse upon entry of monovalent and divalent cations such as sodium and calcium. The receptor then desensitizes rapidly and enters a transient inactive state, characterized by the presence of bound agonist. In the presence of CACNG8, shows resensitization which is characterized by a delayed accumulation of current flux upon continued application of L-glutamate. The polypeptide is Glutamate receptor 4 (Macaca fascicularis (Crab-eating macaque)).